The following is a 269-amino-acid chain: tRNA (guanine-N(1)-)-methyltransferase (269 aa).

S-adenosyl-L-methionine is bound by residues glycine 115 and 139–144 (LGDYVL).

It belongs to the RNA methyltransferase TrmD family. In terms of assembly, homodimer.

The protein localises to the cytoplasm. It catalyses the reaction guanosine(37) in tRNA + S-adenosyl-L-methionine = N(1)-methylguanosine(37) in tRNA + S-adenosyl-L-homocysteine + H(+). Specifically methylates guanosine-37 in various tRNAs. In Pseudarthrobacter chlorophenolicus (strain ATCC 700700 / DSM 12829 / CIP 107037 / JCM 12360 / KCTC 9906 / NCIMB 13794 / A6) (Arthrobacter chlorophenolicus), this protein is tRNA (guanine-N(1)-)-methyltransferase.